Reading from the N-terminus, the 361-residue chain is Phospho-N-acetylmuramoyl-pentapeptide-transferase (361 aa).

A run of 10 helical transmembrane segments spans residues 28–48 (LAII…IKFL), 74–94 (TMGG…LADL), 99–119 (TWIT…DDYA), 133–153 (SKLL…EYLD), 168–188 (LSLD…VGSS), 203–223 (VPIA…GNLI), 236–256 (TGEL…FLWF), 263–283 (VFMG…ISVI), 288–308 (IVLA…ILQV), and 338–358 (KVVI…LSSL).

Belongs to the glycosyltransferase 4 family. MraY subfamily. Requires Mg(2+) as cofactor.

The protein localises to the cell inner membrane. The enzyme catalyses UDP-N-acetyl-alpha-D-muramoyl-L-alanyl-gamma-D-glutamyl-meso-2,6-diaminopimeloyl-D-alanyl-D-alanine + di-trans,octa-cis-undecaprenyl phosphate = di-trans,octa-cis-undecaprenyl diphospho-N-acetyl-alpha-D-muramoyl-L-alanyl-D-glutamyl-meso-2,6-diaminopimeloyl-D-alanyl-D-alanine + UMP. Its pathway is cell wall biogenesis; peptidoglycan biosynthesis. Its function is as follows. Catalyzes the initial step of the lipid cycle reactions in the biosynthesis of the cell wall peptidoglycan: transfers peptidoglycan precursor phospho-MurNAc-pentapeptide from UDP-MurNAc-pentapeptide onto the lipid carrier undecaprenyl phosphate, yielding undecaprenyl-pyrophosphoryl-MurNAc-pentapeptide, known as lipid I. The sequence is that of Phospho-N-acetylmuramoyl-pentapeptide-transferase from Rickettsia massiliae (strain Mtu5).